The following is a 72-amino-acid chain: Translation initiation factor IF-1 (72 aa).

Residues Met1–Arg72 form the S1-like domain.

This sequence belongs to the IF-1 family. As to quaternary structure, component of the 30S ribosomal translation pre-initiation complex which assembles on the 30S ribosome in the order IF-2 and IF-3, IF-1 and N-formylmethionyl-tRNA(fMet); mRNA recruitment can occur at any time during PIC assembly.

It is found in the cytoplasm. Functionally, one of the essential components for the initiation of protein synthesis. Stabilizes the binding of IF-2 and IF-3 on the 30S subunit to which N-formylmethionyl-tRNA(fMet) subsequently binds. Helps modulate mRNA selection, yielding the 30S pre-initiation complex (PIC). Upon addition of the 50S ribosomal subunit IF-1, IF-2 and IF-3 are released leaving the mature 70S translation initiation complex. In Sodalis glossinidius (strain morsitans), this protein is Translation initiation factor IF-1.